The following is a 377-amino-acid chain: 4-hydroxy-3-methylbut-2-en-1-yl diphosphate synthase (flavodoxin) (377 aa).

The [4Fe-4S] cluster site is built by Cys-275, Cys-278, Cys-310, and Glu-317.

Belongs to the IspG family. The cofactor is [4Fe-4S] cluster.

It catalyses the reaction (2E)-4-hydroxy-3-methylbut-2-enyl diphosphate + oxidized [flavodoxin] + H2O + 2 H(+) = 2-C-methyl-D-erythritol 2,4-cyclic diphosphate + reduced [flavodoxin]. It functions in the pathway isoprenoid biosynthesis; isopentenyl diphosphate biosynthesis via DXP pathway; isopentenyl diphosphate from 1-deoxy-D-xylulose 5-phosphate: step 5/6. In terms of biological role, converts 2C-methyl-D-erythritol 2,4-cyclodiphosphate (ME-2,4cPP) into 1-hydroxy-2-methyl-2-(E)-butenyl 4-diphosphate. In Jannaschia sp. (strain CCS1), this protein is 4-hydroxy-3-methylbut-2-en-1-yl diphosphate synthase (flavodoxin).